The sequence spans 596 residues: Transcription factor EGL1 (596 aa).

The region spanning 401–450 (EETGNHALSEKKRREKLNERFMTLRSIIPSISKIDKVSILDDTIEYLQDL) is the bHLH domain.

As to quaternary structure, efficient DNA binding requires dimerization with another bHLH protein. Homodimer and heterodimer with GL3. Interacts with CPC, MYB0/GL1, MYB5, MYB23, MYB113, MYB114, MYB75/PAP1, MYB90/PAP2, TT2, TRY, TTG1 and MYB66/WER. In terms of tissue distribution, ubiquitous with higher levels in buds and flowers. Specifically localized in developing root hair cells. Expressed in epidermal root hair cells (trichoblasts) and moves to root hairless cells (atrichoblasts) by a cell-to-cell movement through plasmodesmata (at protein level).

It is found in the nucleus. Its function is as follows. Transcription activator, when associated with MYB75/PAP1, MYB90/PAP2 or TT2. Involved in epidermal cell fate specification. Negatively regulates stomata formation but promotes trichome formation. Together with MYB66/WER, promotes the formation of non-hair cells in root epidermis cells in the N position. Whereas together with CPC, promotes the formation of hair cells in root epidermis cells in the H position by inhibiting non-hair cell formation. Also seems to play a role in the activation of anthocyanin biosynthesis, probably together with MYB75/PAP1. Involved in seed mucilage production. Activates the transcription of GL2. The protein is Transcription factor EGL1 (BHLH2) of Arabidopsis thaliana (Mouse-ear cress).